We begin with the raw amino-acid sequence, 303 residues long: Tobamovirus multiplication protein 3 (303 aa).

The Extracellular portion of the chain corresponds to Met1–Arg48. Residues Ile49–Val69 traverse the membrane as a helical segment. Over Arg70–Thr82 the chain is Cytoplasmic. A helical transmembrane segment spans residues Gln83–Phe103. The Extracellular portion of the chain corresponds to Arg104–His117. Residues Ile118 to Trp138 traverse the membrane as a helical segment. The Cytoplasmic segment spans residues Ala139–Ser156. Residues Phe157–Trp177 form a helical membrane-spanning segment. The Extracellular portion of the chain corresponds to Lys178–Met183. Residues Val184–Leu204 form a helical membrane-spanning segment. At Tyr205–Tyr232 the chain is on the cytoplasmic side. A helical transmembrane segment spans residues Val233–Phe253. Residues Asp254–Pro265 are Extracellular-facing. A helical membrane pass occupies residues Ile266–Ile286. The Cytoplasmic portion of the chain corresponds to Leu287 to Arg303.

It belongs to the plant tobamovirus multiplication TOM1 protein family. In terms of assembly, constituent of tobamovirus replication complex. Interacts with the helicase domain of tobamovirus-encoded replication proteins.

It localises to the vacuole membrane. Its function is as follows. Contributes to the intracellular multiplication of tobamoviruses, probably being a membrane anchor promoting the formation of the replication complex. This chain is Tobamovirus multiplication protein 3 (TOM3), found in Arabidopsis thaliana (Mouse-ear cress).